Reading from the N-terminus, the 325-residue chain is Interferon regulatory factor 1 (325 aa).

Residues 5 to 113 (RMRMRPWLEM…SAVRVYRMLP (109 aa)) constitute a DNA-binding region (IRF tryptophan pentad repeat). Residue Lys78 is modified to N6-acetyllysine. Positions 92-165 (EEVKDQSRNK…TLPDDHSSYT (74 aa)) are disordered. Over residues 141 to 157 (GDSSPDTFSDGLSSSTL) the composition is skewed to polar residues. Glycyl lysine isopeptide (Lys-Gly) (interchain with G-Cter in SUMO) cross-links involve residues Lys275 and Lys299.

This sequence belongs to the IRF family. Monomer. Homodimer. Interacts with EP300. Interacts with MYD88. Interacts with PIAS3. Interacts with SPOP. Phosphorylated by CK2 and this positively regulates its activity. Post-translationally, sumoylation represses the transcriptional activity and displays enhanced resistance to protein degradation. Sumoylated by UBE2I/UBC9 and SUMO1. Inactivates the tumor suppressor activity. Elevated levels in tumor cells. Major site is Lys-275. Sumoylation is enhanced by PIAS3. Desumoylated by SENP1 in tumor cells and appears to compete with ubiquitination on C-terminal sites. In terms of processing, ubiquitinated in a SPOP-depedent manner. Appears to compete with sumoylation on C-terminal sites.

Its subcellular location is the nucleus. It localises to the cytoplasm. With respect to regulation, activated by MYD88. Its function is as follows. Transcriptional regulator which displays a remarkable functional diversity in the regulation of cellular responses. Regulates transcription of IFN and IFN-inducible genes, host response to viral and bacterial infections, regulation of many genes expressed during hematopoiesis, inflammation, immune responses and cell proliferation and differentiation, regulation of the cell cycle and induction of growth arrest and programmed cell death following DNA damage. Stimulates both innate and acquired immune responses through the activation of specific target genes and can act as a transcriptional activator and repressor regulating target genes by binding to an interferon-stimulated response element (ISRE) in their promoters. Has an essentail role in IFNG-dependent immunity to mycobacteria. Competes with the transcriptional repressor ZBED2 for binding to a common consensus sequence in gene promoters. Its target genes for transcriptional activation activity include: genes involved in anti-viral response, such as IFN-alpha/beta, RIGI, TNFSF10/TRAIL, ZBP1, OAS1/2, PIAS1/GBP, EIF2AK2/PKR and RSAD2/viperin; antibacterial response, such as GBP2, GBP5 and NOS2/INOS; anti-proliferative response, such as p53/TP53, LOX and CDKN1A; apoptosis, such as BBC3/PUMA, CASP1, CASP7 and CASP8; immune response, such as IL7, IL12A/B and IL15, PTGS2/COX2 and CYBB; DNA damage responses and DNA repair, such as POLQ/POLH; MHC class I expression, such as TAP1, PSMB9/LMP2, PSME1/PA28A, PSME2/PA28B and B2M and MHC class II expression, such as CIITA; metabolic enzymes, such as ACOD1/IRG1. Represses genes involved in anti-proliferative response, such as BIRC5/survivin, CCNB1, CCNE1, CDK1, CDK2 and CDK4 and in immune response, such as FOXP3, IL4, ANXA2 and TLR4. Stimulates p53/TP53-dependent transcription through enhanced recruitment of EP300 leading to increased acetylation of p53/TP53. Plays an important role in immune response directly affecting NK maturation and activity, macrophage production of IL12, Th1 development and maturation of CD8+ T-cells. Also implicated in the differentiation and maturation of dendritic cells and in the suppression of regulatory T (Treg) cells development. Acts as a tumor suppressor and plays a role not only in antagonism of tumor cell growth but also in stimulating an immune response against tumor cells. The polypeptide is Interferon regulatory factor 1 (IRF1) (Homo sapiens (Human)).